The sequence spans 336 residues: Glycerol-3-phosphate dehydrogenase [NAD(P)+] (336 aa).

NADPH-binding residues include Trp-11, Arg-33, and Lys-105. Residues Lys-105, Gly-141, and Ser-143 each coordinate sn-glycerol 3-phosphate. Position 145 (Ala-145) interacts with NADPH. Residues Lys-196, Asp-249, Ser-259, Arg-260, and Asn-261 each coordinate sn-glycerol 3-phosphate. Lys-196 acts as the Proton acceptor in catalysis. Arg-260 serves as a coordination point for NADPH. NADPH-binding residues include Val-284 and Glu-286.

Belongs to the NAD-dependent glycerol-3-phosphate dehydrogenase family.

The protein localises to the cytoplasm. The enzyme catalyses sn-glycerol 3-phosphate + NAD(+) = dihydroxyacetone phosphate + NADH + H(+). The catalysed reaction is sn-glycerol 3-phosphate + NADP(+) = dihydroxyacetone phosphate + NADPH + H(+). Its pathway is membrane lipid metabolism; glycerophospholipid metabolism. Catalyzes the reduction of the glycolytic intermediate dihydroxyacetone phosphate (DHAP) to sn-glycerol 3-phosphate (G3P), the key precursor for phospholipid synthesis. This chain is Glycerol-3-phosphate dehydrogenase [NAD(P)+], found in Delftia acidovorans (strain DSM 14801 / SPH-1).